Consider the following 440-residue polypeptide: tRNA-2-methylthio-N(6)-dimethylallyladenosine synthase (440 aa).

In terms of domain architecture, MTTase N-terminal spans 2-118 (PKYYIITYGC…LPKILESLDG (117 aa)). [4Fe-4S] cluster-binding residues include C11, C47, C81, C155, C159, and C162. Residues 141-370 (RENKFQAWIP…ENLQRKIIYE (230 aa)) form the Radical SAM core domain. Positions 373–436 (LSRVGKEEIV…LWSLKGEVIR (64 aa)) constitute a TRAM domain.

The protein belongs to the methylthiotransferase family. MiaB subfamily. As to quaternary structure, monomer. [4Fe-4S] cluster is required as a cofactor.

Its subcellular location is the cytoplasm. It catalyses the reaction N(6)-dimethylallyladenosine(37) in tRNA + (sulfur carrier)-SH + AH2 + 2 S-adenosyl-L-methionine = 2-methylsulfanyl-N(6)-dimethylallyladenosine(37) in tRNA + (sulfur carrier)-H + 5'-deoxyadenosine + L-methionine + A + S-adenosyl-L-homocysteine + 2 H(+). Its function is as follows. Catalyzes the methylthiolation of N6-(dimethylallyl)adenosine (i(6)A), leading to the formation of 2-methylthio-N6-(dimethylallyl)adenosine (ms(2)i(6)A) at position 37 in tRNAs that read codons beginning with uridine. This is tRNA-2-methylthio-N(6)-dimethylallyladenosine synthase from Dictyoglomus thermophilum (strain ATCC 35947 / DSM 3960 / H-6-12).